A 453-amino-acid polypeptide reads, in one-letter code: Serine--tRNA ligase (453 aa).

252–254 is an L-serine binding site; it reads TAE. Residues 283 to 285 and V299 each bind ATP; that span reads RKE. E306 is a binding site for L-serine. 370-373 contacts ATP; sequence EMVS. Position 405 (T405) interacts with L-serine.

The protein belongs to the class-II aminoacyl-tRNA synthetase family. Type-1 seryl-tRNA synthetase subfamily. Homodimer. The tRNA molecule binds across the dimer.

It is found in the cytoplasm. The enzyme catalyses tRNA(Ser) + L-serine + ATP = L-seryl-tRNA(Ser) + AMP + diphosphate + H(+). It carries out the reaction tRNA(Sec) + L-serine + ATP = L-seryl-tRNA(Sec) + AMP + diphosphate + H(+). Its pathway is aminoacyl-tRNA biosynthesis; selenocysteinyl-tRNA(Sec) biosynthesis; L-seryl-tRNA(Sec) from L-serine and tRNA(Sec): step 1/1. Catalyzes the attachment of serine to tRNA(Ser). Is also able to aminoacylate tRNA(Sec) with serine, to form the misacylated tRNA L-seryl-tRNA(Sec), which will be further converted into selenocysteinyl-tRNA(Sec). This is Serine--tRNA ligase from Sulfurisphaera tokodaii (strain DSM 16993 / JCM 10545 / NBRC 100140 / 7) (Sulfolobus tokodaii).